The chain runs to 617 residues: Electron transfer flavoprotein-ubiquinone oxidoreductase, mitochondrial (617 aa).

Residues 1–33 (MMVPLAKLASPAYQCFHALKIKKNYLPLCATRW) constitute a mitochondrion transit peptide. FAD is bound at residue 75–80 (GAGPAG). Lysine 96 carries the post-translational modification N6-acetyllysine. An intramembrane segment occupies 109-130 (IGAHTLSGACLDPRAFEELFPD). N6-acetyllysine occurs at positions 132 and 223. Residues glycine 305 and glycine 306 each contribute to the a ubiquinone site. N6-acetyllysine is present on lysine 357. The stretch at 428–447 (IGLHVTEYEDNLKNSWVWKE) is an intramembrane region. Position 551 is a phosphoserine (serine 551). Residues cysteine 561, cysteine 586, cysteine 589, and cysteine 592 each contribute to the [4Fe-4S] cluster site. The 4Fe-4S ferredoxin-type domain maps to 577 to 606 (FRLQINAQNCVHCKTCDIKDPSQNINWVVP).

In terms of assembly, monomer. The cofactor is [4Fe-4S] cluster. Requires FAD as cofactor.

It localises to the mitochondrion inner membrane. The enzyme catalyses a ubiquinone + reduced [electron-transfer flavoprotein] = a ubiquinol + oxidized [electron-transfer flavoprotein] + H(+). In terms of biological role, accepts electrons from ETF and reduces ubiquinone. In Sus scrofa (Pig), this protein is Electron transfer flavoprotein-ubiquinone oxidoreductase, mitochondrial (ETFDH).